The chain runs to 373 residues: XK-related protein 9 (373 aa).

The next 8 membrane-spanning stretches (helical) occupy residues 8–28 (FMMS…DIWV), 38–58 (YVFS…AQCF), 166–186 (AAIM…QVAL), 203–223 (ITYL…VVLL), 224–244 (LFLN…LGII), 256–276 (CISM…FTFF), 295–315 (VLGT…IFNP), and 318–338 (FIPI…FLIV).

This sequence belongs to the XK family. Post-translationally, undergoes proteolytic processing by caspase-3 (CASP3), caspase-6 (CASP6) and caspase-7 (CASP7) to generate the XK-related protein 9, processed form, leading to its activation.

The protein resides in the cell membrane. The catalysed reaction is a 1,2-diacyl-sn-glycero-3-phospho-L-serine(in) = a 1,2-diacyl-sn-glycero-3-phospho-L-serine(out). Activated upon caspase cleavage to generate the XK-related protein 9, processed form. Does not act prior the onset of apoptosis. Functionally, phospholipid scramblase that promotes phosphatidylserine exposure on apoptotic cell surface. Phosphatidylserine is a specific marker only present at the surface of apoptotic cells and acts as a specific signal for engulfment. This Pan troglodytes (Chimpanzee) protein is XK-related protein 9.